The following is a 518-amino-acid chain: Dihydro-ML-236C monooxygenase mlcC (518 aa).

Topologically, residues Met-1–Ile-31 are cytoplasmic. A helical; Signal-anchor for type II membrane protein membrane pass occupies residues Ala-32 to Lys-48. Residues Lys-49 to Cys-518 lie on the Lumenal side of the membrane. Residue Cys-454 participates in heme binding.

The protein belongs to the cytochrome P450 family. Heme is required as a cofactor.

The protein resides in the endoplasmic reticulum membrane. The enzyme catalyses dihydro-ML-236C carboxylate + reduced [NADPH--hemoprotein reductase] + O2 = ML-236C carboxylate + oxidized [NADPH--hemoprotein reductase] + 2 H2O + H(+). It catalyses the reaction ML-236C carboxylate + reduced [NADPH--hemoprotein reductase] + O2 = ML-236A carboxylate + oxidized [NADPH--hemoprotein reductase] + H2O + H(+). It functions in the pathway polyketide biosynthesis. Its function is as follows. Dihydro-ML-236C carboxylate monooxygenase; part of the gene cluster that mediates the biosynthesis of compactin, also known as mevastatin or ML-236B, and which acts as a potent competitive inhibitor of HMG-CoA reductase. Compactin biosynthesis is performed in two stages. The first stage is catalyzed by the nonaketide synthase mlcA, which belongs to type I polyketide synthases and catalyzes the iterative nine-step formation of the polyketide. This PKS stage is completed by the action of dehydrogenase mlcG, which catalyzes the NADPH-dependent reduction of the unsaturated tetra-, penta- and heptaketide intermediates that arise during the mlcA-mediated biosynthesis of the nonaketide chain and leads to dihydro-ML-236C carboxylate. Covalently bound dihydro-ML-236C carboxylate is released from mlcA by the mlcF esterase. Conversion of dihydro-ML-236C carboxylate into ML-236A carboxylate is subsequently performed with the participation of molecular oxygen and P450 monoogygenase mlcC. Finally, mlcH performs the conversion of ML-236A carboxylate to ML-236B/compactin carboxylate through the addition of the side-chain diketide moiety produced by the diketide synthase mlcB. The chain is Dihydro-ML-236C monooxygenase mlcC from Penicillium citrinum.